Reading from the N-terminus, the 450-residue chain is UDP-N-acetylmuramoylalanine--D-glutamate ligase (450 aa).

ATP is bound at residue Gly119–Thr125.

It belongs to the MurCDEF family.

It is found in the cytoplasm. It catalyses the reaction UDP-N-acetyl-alpha-D-muramoyl-L-alanine + D-glutamate + ATP = UDP-N-acetyl-alpha-D-muramoyl-L-alanyl-D-glutamate + ADP + phosphate + H(+). It functions in the pathway cell wall biogenesis; peptidoglycan biosynthesis. Functionally, cell wall formation. Catalyzes the addition of glutamate to the nucleotide precursor UDP-N-acetylmuramoyl-L-alanine (UMA). The sequence is that of UDP-N-acetylmuramoylalanine--D-glutamate ligase from Streptococcus pneumoniae (strain P1031).